The chain runs to 270 residues: Dihydroorotate dehydrogenase B (NAD(+)), catalytic subunit (270 aa).

FMN contacts are provided by residues Ser-12 and 35 to 36; that span reads KT. Residues Lys-35, 59 to 63, and Asn-114 each bind substrate; that span reads NRIGL. Asn-114 contributes to the FMN binding site. The active-site Nucleophile is the Cys-117. 2 residues coordinate FMN: Lys-153 and Val-179. 180–181 is a binding site for substrate; the sequence is NT. Residues Gly-199, 226 to 227, and 248 to 249 each bind FMN; these read GG and GS.

This sequence belongs to the dihydroorotate dehydrogenase family. Type 1 subfamily. In terms of assembly, heterotetramer of 2 PyrK and 2 PyrD type B subunits. It depends on FMN as a cofactor.

Its subcellular location is the cytoplasm. The catalysed reaction is (S)-dihydroorotate + NAD(+) = orotate + NADH + H(+). Its pathway is pyrimidine metabolism; UMP biosynthesis via de novo pathway; orotate from (S)-dihydroorotate (NAD(+) route): step 1/1. Functionally, catalyzes the conversion of dihydroorotate to orotate with NAD(+) as electron acceptor. This is Dihydroorotate dehydrogenase B (NAD(+)), catalytic subunit (pyrD) from Thermotoga maritima (strain ATCC 43589 / DSM 3109 / JCM 10099 / NBRC 100826 / MSB8).